The following is a 172-amino-acid chain: Trypsin inhibitor DE-3 (172 aa).

2 cysteine pairs are disulfide-bonded: C39–C83 and C132–C139.

The protein belongs to the protease inhibitor I3 (leguminous Kunitz-type inhibitor) family.

Its function is as follows. Inhibition of trypsin. The sequence is that of Trypsin inhibitor DE-3 from Erythrina caffra (Kaffir tree).